We begin with the raw amino-acid sequence, 151 residues long: Endoribonuclease YbeY (151 aa).

Residues H113, H117, and H123 each contribute to the Zn(2+) site.

It belongs to the endoribonuclease YbeY family. The cofactor is Zn(2+).

It localises to the cytoplasm. Functionally, single strand-specific metallo-endoribonuclease involved in late-stage 70S ribosome quality control and in maturation of the 3' terminus of the 16S rRNA. The protein is Endoribonuclease YbeY of Polaromonas naphthalenivorans (strain CJ2).